The primary structure comprises 335 residues: MTDKTIAFSLLDLAPIPEGSSAREAFSHSLDLARLAEKRGYHRYWLAEHHNMTGIASAATSVLIGYLAANTTTLHLGSGGVMLPNHSPLVIAEQFGTLNTLYPGRIDLGLGRAPGSDQRTMMALRRHMSGDIDNFPRDVAELVDWFDARDPNPHVRPVPGYGEKIPVWLLGSSLYSAQLAAQLGLPFAFASHFAPDMLFQALHLYRSNFKPSARLEKPYAMVCINIIAADSNRDAEFLFTSMQQAFVKLRRGETGQLPPPIQNMDQFWSPSEQYGVQQALSMSLVGDKAKVRHGLQSILRETDADEIMVNGQIFDHQARLHSFELAMDVKEELLG.

This sequence to bacterial alkanal monooxygenase alpha and beta chains.

The sequence is that of Luciferase-like monooxygenase (yhbW) from Escherichia coli O6:H1 (strain CFT073 / ATCC 700928 / UPEC).